Here is a 292-residue protein sequence, read N- to C-terminus: NAD kinase (292 aa).

D73 (proton acceptor) is an active-site residue. Residues 73–74 (DG), 147–148 (NE), H158, R175, D177, 188–193 (TAYSLS), and Q247 each bind NAD(+).

This sequence belongs to the NAD kinase family. Requires a divalent metal cation as cofactor.

It is found in the cytoplasm. The catalysed reaction is NAD(+) + ATP = ADP + NADP(+) + H(+). Its function is as follows. Involved in the regulation of the intracellular balance of NAD and NADP, and is a key enzyme in the biosynthesis of NADP. Catalyzes specifically the phosphorylation on 2'-hydroxyl of the adenosine moiety of NAD to yield NADP. This chain is NAD kinase, found in Escherichia coli O157:H7.